Consider the following 65-residue polypeptide: Large ribosomal subunit protein bL35 (65 aa).

Belongs to the bacterial ribosomal protein bL35 family.

The protein is Large ribosomal subunit protein bL35 of Blochmanniella pennsylvanica (strain BPEN).